Consider the following 330-residue polypeptide: Biotin synthase 2 (330 aa).

The Radical SAM core domain maps to Met-48–Arg-278. [4Fe-4S] cluster-binding residues include Cys-66, Cys-70, and Cys-73. [2Fe-2S] cluster is bound by residues Ser-111, Cys-143, Cys-203, and Arg-273.

The protein belongs to the radical SAM superfamily. Biotin synthase family. Homodimer. [4Fe-4S] cluster is required as a cofactor. The cofactor is [2Fe-2S] cluster.

It carries out the reaction (4R,5S)-dethiobiotin + (sulfur carrier)-SH + 2 reduced [2Fe-2S]-[ferredoxin] + 2 S-adenosyl-L-methionine = (sulfur carrier)-H + biotin + 2 5'-deoxyadenosine + 2 L-methionine + 2 oxidized [2Fe-2S]-[ferredoxin]. Its pathway is cofactor biosynthesis; biotin biosynthesis; biotin from 7,8-diaminononanoate: step 2/2. Its function is as follows. Catalyzes the conversion of dethiobiotin (DTB) to biotin by the insertion of a sulfur atom into dethiobiotin via a radical-based mechanism. The protein is Biotin synthase 2 of Corynebacterium diphtheriae (strain ATCC 700971 / NCTC 13129 / Biotype gravis).